The primary structure comprises 421 residues: 4-aminobutyrate aminotransferase PuuE (421 aa).

Pyridoxal 5'-phosphate contacts are provided by residues 110-111 (GA) and 238-241 (DEVQ). At Lys267 the chain carries N6-(pyridoxal phosphate)lysine. Thr296 serves as a coordination point for pyridoxal 5'-phosphate.

It belongs to the class-III pyridoxal-phosphate-dependent aminotransferase family. Requires pyridoxal 5'-phosphate as cofactor.

It carries out the reaction 4-aminobutanoate + 2-oxoglutarate = succinate semialdehyde + L-glutamate. The protein operates within amine and polyamine degradation; putrescine degradation; succinate semialdehyde from 4-aminobutanoate. Completely inhibited by succinate and low-aeration conditions. Catalyzes the transfer of the amino group from gamma-aminobutyrate (GABA) to alpha-ketoglutarate (KG) to yield succinic semialdehyde (SSA). PuuE is important for utilization of putrescine as the sole nitrogen or carbon source. The chain is 4-aminobutyrate aminotransferase PuuE (puuE) from Escherichia coli (strain K12).